The chain runs to 933 residues: Valine--tRNA ligase (933 aa).

Residues 1–24 (MIERVKTTKLSEASGLPKTYDPVG) form a disordered region. A 'HIGH' region motif is present at residues 57–67 (PNVTGSLHMGH). The 'KMSKS' region motif lies at 557-561 (KMSKS). Lys-560 lines the ATP pocket. Residues 866–932 (LIDIASLRSR…RLVKERLMGL (67 aa)) adopt a coiled-coil conformation.

This sequence belongs to the class-I aminoacyl-tRNA synthetase family. ValS type 1 subfamily. Monomer.

The protein resides in the cytoplasm. The enzyme catalyses tRNA(Val) + L-valine + ATP = L-valyl-tRNA(Val) + AMP + diphosphate. Catalyzes the attachment of valine to tRNA(Val). As ValRS can inadvertently accommodate and process structurally similar amino acids such as threonine, to avoid such errors, it has a 'posttransfer' editing activity that hydrolyzes mischarged Thr-tRNA(Val) in a tRNA-dependent manner. The sequence is that of Valine--tRNA ligase from Prochlorococcus marinus (strain NATL2A).